The primary structure comprises 29 residues: Cytochrome b6-f complex subunit 8 (29 aa).

The helical transmembrane segment at 3 to 23 (IISLGWSSLLVVFTFSLSLVV) threads the bilayer.

It belongs to the PetN family. The 4 large subunits of the cytochrome b6-f complex are cytochrome b6, subunit IV (17 kDa polypeptide, PetD), cytochrome f and the Rieske protein, while the 4 small subunits are PetG, PetL, PetM and PetN. The complex functions as a dimer.

The protein resides in the plastid. The protein localises to the chloroplast thylakoid membrane. Functionally, component of the cytochrome b6-f complex, which mediates electron transfer between photosystem II (PSII) and photosystem I (PSI), cyclic electron flow around PSI, and state transitions. The protein is Cytochrome b6-f complex subunit 8 of Rhodomonas salina (Cryptomonas salina).